The chain runs to 838 residues: RNA-binding protein 5 (838 aa).

The interval 1–86 is disordered; the sequence is MGSDKRVSRS…EDGYHSDGDY (86 aa). In terms of domain architecture, RRM 1 spans 103–183; the sequence is KTIMLRGLPI…KTIAMHYSNP (81 aa). The segment at 186–215 adopts a RanBP2-type zinc-finger fold; it reads KFEDWLCNKCGLYNFRRRLKCFRCGAAKAE. The RRM 2 domain maps to 242 to 326; it reads SAIILRNIGP…KTVGVDFAKS (85 aa). Polar residues-rich tracts occupy residues 396–406 and 416–439; these read QTGAAEQSTAP and ATTS…TQSG. Disordered stretches follow at residues 396–473 and 524–561; these read QTGA…YSVP and AADG…AQQI. Low complexity predominate over residues 440–462; sequence TSTAANTTPASTTSTTEEAAPPN. The segment covering 531-540 has biased composition (polar residues); the sequence is SGAQPNGANA. The segment at 671 to 696 adopts a C2H2-type zinc-finger fold; it reads LACLLCRRQFPNKDALTRHQQLSDLH. Residues 766-812 form the G-patch domain; it reads NSNIGNKMLQAMGWKEGSGLGRKSQGITAPIQAQVRMRGAGLGAKGS.

The protein belongs to the RBM5/RBM10 family. In terms of assembly, component of the spliceosome A complex (also known as the prespliceosome). Appears to dissociate from the spliceosome upon formation of the spliceosome B complex (also known as the precatalytic spliceosome), in which the heterotrimeric U4/U6.U5 snRNPs are bound.

It is found in the nucleus. In terms of biological role, component of the spliceosome A complex. Regulates alternative splicing of a number of mRNAs. May modulate splice site pairing after recruitment of the U1 and U2 snRNPs to the 5' and 3' splice sites of the intron. This is RNA-binding protein 5 (rbm5) from Xenopus tropicalis (Western clawed frog).